We begin with the raw amino-acid sequence, 325 residues long: Biotin synthase (325 aa).

Residues 42–270 enclose the Radical SAM core domain; that stretch reads YKVQLASLLS…QSRVRLSAGR (229 aa). The [4Fe-4S] cluster site is built by Cys-57, Cys-61, and Cys-64. Residues Cys-101, Cys-133, Cys-193, and Arg-265 each coordinate [2Fe-2S] cluster.

The protein belongs to the radical SAM superfamily. Biotin synthase family. Homodimer. Requires [4Fe-4S] cluster as cofactor. It depends on [2Fe-2S] cluster as a cofactor.

The enzyme catalyses (4R,5S)-dethiobiotin + (sulfur carrier)-SH + 2 reduced [2Fe-2S]-[ferredoxin] + 2 S-adenosyl-L-methionine = (sulfur carrier)-H + biotin + 2 5'-deoxyadenosine + 2 L-methionine + 2 oxidized [2Fe-2S]-[ferredoxin]. It participates in cofactor biosynthesis; biotin biosynthesis; biotin from 7,8-diaminononanoate: step 2/2. In terms of biological role, catalyzes the conversion of dethiobiotin (DTB) to biotin by the insertion of a sulfur atom into dethiobiotin via a radical-based mechanism. The chain is Biotin synthase from Synechococcus sp. (strain WH7803).